Here is a 458-residue protein sequence, read N- to C-terminus: UDP-glycosyltransferase 76G1 (458 aa).

Histidine 25 serves as the catalytic Proton acceptor. Histidine 25 is a binding site for rebaudioside A. Rubusoside is bound at residue histidine 25. UDP is bound at residue asparagine 27. The active-site Charge relay is the aspartate 124. Rebaudioside A-binding positions include 146 to 147 (TS) and histidine 155. UDP contacts are provided by residues serine 283, 338–339 (WV), and 356–364 (HSGWNSTLE). Residues tryptophan 359 and 380-381 (DQ) each bind rebaudioside A.

The protein belongs to the UDP-glycosyltransferase family. As to quaternary structure, monomer.

The enzyme catalyses steviolbioside + UDP-alpha-D-glucose = rebaudioside B + UDP + H(+). It carries out the reaction stevioside + UDP-alpha-D-glucose = rebaudioside A + UDP + H(+). The catalysed reaction is rebaudioside E + UDP-alpha-D-glucose = rebaudioside D + UDP + H(+). It catalyses the reaction rebaudioside D + UDP-alpha-D-glucose = rebaudioside M + UDP + H(+). Functionally, involved in the biosynthesis of steviol glycosides in leaves. Converts the di-glycoside steviolbioside to the tri-glycoside rebaudioside B. Converts the tri-glycoside stevioside to the tetra-glycoside rebaudioside A. Converts the tetra-glycoside rebaudioside E to the penta-glycoside rebaudioside D. Converts the penta-glycoside rebaudioside D to the hexa-glycoside rebaudioside M. Can glucosylate rubusoside and rebaudioside A in vitro. The protein is UDP-glycosyltransferase 76G1 of Stevia rebaudiana (Stevia).